Here is a 240-residue protein sequence, read N- to C-terminus: Uridylate kinase (240 aa).

12–15 lines the ATP pocket; sequence KLSG. An involved in allosteric activation by GTP region spans residues 20-25; that stretch reads GEQGNG. A UMP-binding site is contributed by glycine 54. Glycine 55 and arginine 59 together coordinate ATP. Residues aspartate 74 and 135–142 contribute to the UMP site; that span reads TGNPYFST. Asparagine 163, tyrosine 169, and aspartate 172 together coordinate ATP.

Belongs to the UMP kinase family. As to quaternary structure, homohexamer.

It localises to the cytoplasm. It carries out the reaction UMP + ATP = UDP + ADP. It functions in the pathway pyrimidine metabolism; CTP biosynthesis via de novo pathway; UDP from UMP (UMPK route): step 1/1. With respect to regulation, allosterically activated by GTP. Inhibited by UTP. Functionally, catalyzes the reversible phosphorylation of UMP to UDP. This is Uridylate kinase from Bacillus licheniformis (strain ATCC 14580 / DSM 13 / JCM 2505 / CCUG 7422 / NBRC 12200 / NCIMB 9375 / NCTC 10341 / NRRL NRS-1264 / Gibson 46).